A 324-amino-acid chain; its full sequence is tRNA(Ile)-lysidine synthase (324 aa).

33–38 is an ATP binding site; the sequence is SGGPDS.

The protein belongs to the tRNA(Ile)-lysidine synthase family.

The protein resides in the cytoplasm. The catalysed reaction is cytidine(34) in tRNA(Ile2) + L-lysine + ATP = lysidine(34) in tRNA(Ile2) + AMP + diphosphate + H(+). Ligates lysine onto the cytidine present at position 34 of the AUA codon-specific tRNA(Ile) that contains the anticodon CAU, in an ATP-dependent manner. Cytidine is converted to lysidine, thus changing the amino acid specificity of the tRNA from methionine to isoleucine. The polypeptide is tRNA(Ile)-lysidine synthase (Thermobifida fusca (strain YX)).